Here is a 317-residue protein sequence, read N- to C-terminus: Aspartate carbamoyltransferase catalytic subunit (317 aa).

Residues Arg-66 and Thr-67 each coordinate carbamoyl phosphate. Lys-94 provides a ligand contact to L-aspartate. Positions 116, 144, and 147 each coordinate carbamoyl phosphate. Positions 177 and 231 each coordinate L-aspartate. The carbamoyl phosphate site is built by Gly-272 and Pro-273.

The protein belongs to the aspartate/ornithine carbamoyltransferase superfamily. ATCase family. As to quaternary structure, heterododecamer (2C3:3R2) of six catalytic PyrB chains organized as two trimers (C3), and six regulatory PyrI chains organized as three dimers (R2).

The enzyme catalyses carbamoyl phosphate + L-aspartate = N-carbamoyl-L-aspartate + phosphate + H(+). Its pathway is pyrimidine metabolism; UMP biosynthesis via de novo pathway; (S)-dihydroorotate from bicarbonate: step 2/3. Catalyzes the condensation of carbamoyl phosphate and aspartate to form carbamoyl aspartate and inorganic phosphate, the committed step in the de novo pyrimidine nucleotide biosynthesis pathway. This chain is Aspartate carbamoyltransferase catalytic subunit, found in Rhodopseudomonas palustris (strain BisB18).